A 335-amino-acid chain; its full sequence is Glutamyl-tRNA reductase (335 aa).

Residues 60–63, serine 110, 115–117, and glutamine 121 each bind substrate; these read TCHR and ETE. The active-site Nucleophile is cysteine 61. 189–194 provides a ligand contact to NADP(+); it reads GYSEIN.

Belongs to the glutamyl-tRNA reductase family. In terms of assembly, homodimer.

The catalysed reaction is (S)-4-amino-5-oxopentanoate + tRNA(Glu) + NADP(+) = L-glutamyl-tRNA(Glu) + NADPH + H(+). Its pathway is porphyrin-containing compound metabolism; protoporphyrin-IX biosynthesis; 5-aminolevulinate from L-glutamyl-tRNA(Glu): step 1/2. Catalyzes the NADPH-dependent reduction of glutamyl-tRNA(Glu) to glutamate 1-semialdehyde (GSA). This Chlamydia trachomatis serovar L2 (strain ATCC VR-902B / DSM 19102 / 434/Bu) protein is Glutamyl-tRNA reductase.